The following is a 285-amino-acid chain: Malectin (285 aa).

The first 26 residues, 1–26 (MRRVTLHCAARLVIAALWLLVEVCRA), serve as a signal peptide directing secretion. The Lumenal portion of the chain corresponds to 27 to 262 (ESGAQSLAER…TPNPYATDNS (236 aa)). The a carbohydrate site is built by Tyr-71, Tyr-93, Tyr-120, Phe-121, and Asp-190. A disordered region spans residues 209-258 (KLQPHPGLEKREEEEEEEEEGEGPEGEKKSASTSPKNPVRSGPRTPNPYA). The span at 220-232 (EEEEEEEEEGEGP) shows a compositional bias: acidic residues. Asn-261 carries an N-linked (GlcNAc...) asparagine glycan. A helical membrane pass occupies residues 263 to 283 (SLMFPILVAFGVFIPTLFCLC). The Cytoplasmic portion of the chain corresponds to 284-285 (RL).

The protein belongs to the malectin family.

The protein localises to the endoplasmic reticulum membrane. Functionally, carbohydrate-binding protein with a strong ligand preference for Glc2-N-glycan. May play a role in the early steps of protein N-glycosylation. This is Malectin from Danio rerio (Zebrafish).